The chain runs to 579 residues: Maintenance of mitochondrial morphology protein 1 (579 aa).

Over 1 to 43 the chain is Lumenal; it reads MQQPQQQDLQIGLPYAPVQPPIPSPAAYFAYLPSPSRWTFTQG. Residues 44–64 traverse the membrane as a helical segment; it reads LIVGQVSMVIVALLLIRYVIF. The Cytoplasmic segment spans residues 65–579; sequence EDSATALEKE…GLRNRPGFVQ (515 aa). In terms of domain architecture, SMP-LTD spans 150–391; the sequence is LPESADWLNV…WPRYWSLTLP (242 aa). Disordered stretches follow at residues 309 to 332, 460 to 479, and 558 to 579; these read VLPT…RSRH, RPSL…SGLR, and SSVL…GFVQ. Low complexity-rich tracts occupy residues 311–328 and 465–476; these read PTAN…ATPP and SSRPPHVRSSSS.

This sequence belongs to the MMM1 family. Homodimer. Component of the ER-mitochondria encounter structure (ERMES) or MDM complex, composed of MMM1, MDM10, MDM12 and MDM34. An MMM1 homodimer associates with one molecule of MDM12 on each side in a pairwise head-to-tail manner, and the SMP-LTD domains of MMM1 and MDM12 generate a continuous hydrophobic tunnel for phospholipid trafficking.

The protein localises to the endoplasmic reticulum membrane. Component of the ERMES/MDM complex, which serves as a molecular tether to connect the endoplasmic reticulum (ER) and mitochondria. Components of this complex are involved in the control of mitochondrial shape and protein biogenesis, and function in nonvesicular lipid trafficking between the ER and mitochondria. The MDM12-MMM1 subcomplex functions in the major beta-barrel assembly pathway that is responsible for biogenesis of all outer membrane beta-barrel proteins, and acts in a late step after the SAM complex. The MDM10-MDM12-MMM1 subcomplex further acts in the TOM40-specific pathway after the action of the MDM12-MMM1 complex. Essential for establishing and maintaining the structure of mitochondria and maintenance of mtDNA nucleoids. The polypeptide is Maintenance of mitochondrial morphology protein 1 (Mycosarcoma maydis (Corn smut fungus)).